We begin with the raw amino-acid sequence, 562 residues long: Arginine--tRNA ligase (562 aa).

Residues 129–139 (ANPTGPLHVGH) carry the 'HIGH' region motif.

It belongs to the class-I aminoacyl-tRNA synthetase family. As to quaternary structure, monomer.

The protein localises to the cytoplasm. The catalysed reaction is tRNA(Arg) + L-arginine + ATP = L-arginyl-tRNA(Arg) + AMP + diphosphate. The sequence is that of Arginine--tRNA ligase from Stenotrophomonas maltophilia (strain K279a).